The chain runs to 114 residues: Anti-adapter protein IraM (114 aa).

It belongs to the IraM/RssC family.

It localises to the cytoplasm. Functionally, involved in the stabilization of the sigma stress factor RpoS. This is Anti-adapter protein IraM from Citrobacter koseri (strain ATCC BAA-895 / CDC 4225-83 / SGSC4696).